Here is a 145-residue protein sequence, read N- to C-terminus: GLLGLGYGGYGGYGGYGGYGHGLALAAAPAAIAAPAVVAAPAIAHAPAVAVAPAVAHAPAAVSTVSQVSYGTTHYAPAVAKVAAVAAPVAVAAPAIAAAPAVGLGYGHGLGYGHGVGLGYAAAAPALSLGYGGYGHGLSLGYGHH.

Tandem repeats lie at residues 27-30 (AAPA), 33-37 (AAPAV), 39-42 (AAPA), 86-89 (AAPV), 92-95 (AAPA), 98-101 (AAPA), and 123-126 (AAPA).

Functionally, component of the cuticle of migratory locust which contains more than 100 different structural proteins. In Locusta migratoria (Migratory locust), this protein is Cuticle protein 65.